We begin with the raw amino-acid sequence, 239 residues long: Transcriptional activatory protein AadR (239 aa).

27 to 149 (ICGELGPADH…FATRELSLAQ (123 aa)) provides a ligand contact to a nucleoside 3',5'-cyclic phosphate. The region spanning 158-231 (RSAEEKVAAF…PDGVRVLDPK (74 aa)) is the HTH crp-type domain. Positions 191–210 (RQDIADFLGLTIETVSRTFT) form a DNA-binding region, H-T-H motif.

In terms of biological role, transcriptional activator of anaerobic gene expression. For aromatic acid degradation. Also required for the anaerobic degradation of benzoate. This is Transcriptional activatory protein AadR (aadR) from Rhodopseudomonas palustris (strain ATCC BAA-98 / CGA009).